Here is a 526-residue protein sequence, read N- to C-terminus: ATP synthase subunit alpha (526 aa).

ATP is bound at residue 171–178 (GDRQTGKT).

This sequence belongs to the ATPase alpha/beta chains family. As to quaternary structure, F-type ATPases have 2 components, CF(1) - the catalytic core - and CF(0) - the membrane proton channel. CF(1) has five subunits: alpha(3), beta(3), gamma(1), delta(1), epsilon(1). CF(0) has four main subunits: a(1), b(1), b'(1) and c(9-12).

It localises to the cell inner membrane. The catalysed reaction is ATP + H2O + 4 H(+)(in) = ADP + phosphate + 5 H(+)(out). Functionally, produces ATP from ADP in the presence of a proton gradient across the membrane. The alpha chain is a regulatory subunit. This chain is ATP synthase subunit alpha, found in Chlorobium phaeobacteroides (strain DSM 266 / SMG 266 / 2430).